The primary structure comprises 123 residues: Cysteine proteinase inhibitor 8 (123 aa).

The signal sequence occupies residues 1–19; the sequence is MARIPLLLALLLAVSAAAA. Residues 33–91 enclose the Cystatin domain; the sequence is GGWSPITDVGDPHIQELGGWAVERHASLSSDGLRFRRVTSGEQQVVSGMNYRLVVSASD. A Secondary area of contact motif is present at residues 76–80; sequence QVVSG.

The protein belongs to the cystatin family. Phytocystatin subfamily.

The protein resides in the secreted. Functionally, specific inhibitor of cysteine proteinases. Probably involved in the regulation of endogenous processes and in defense against pests and pathogens. The polypeptide is Cysteine proteinase inhibitor 8 (Oryza sativa subsp. japonica (Rice)).